The following is a 428-amino-acid chain: Serine--tRNA ligase (428 aa).

231–233 (TAE) contacts L-serine. Residues 262-264 (RRE) and Val-278 each bind ATP. An L-serine-binding site is contributed by Glu-285. 349-352 (EVSS) serves as a coordination point for ATP. Ser-384 is a binding site for L-serine.

The protein belongs to the class-II aminoacyl-tRNA synthetase family. Type-1 seryl-tRNA synthetase subfamily. Homodimer. The tRNA molecule binds across the dimer.

The protein localises to the cytoplasm. The catalysed reaction is tRNA(Ser) + L-serine + ATP = L-seryl-tRNA(Ser) + AMP + diphosphate + H(+). It catalyses the reaction tRNA(Sec) + L-serine + ATP = L-seryl-tRNA(Sec) + AMP + diphosphate + H(+). It functions in the pathway aminoacyl-tRNA biosynthesis; selenocysteinyl-tRNA(Sec) biosynthesis; L-seryl-tRNA(Sec) from L-serine and tRNA(Sec): step 1/1. Functionally, catalyzes the attachment of serine to tRNA(Ser). Is also able to aminoacylate tRNA(Sec) with serine, to form the misacylated tRNA L-seryl-tRNA(Sec), which will be further converted into selenocysteinyl-tRNA(Sec). This Chlamydia trachomatis serovar A (strain ATCC VR-571B / DSM 19440 / HAR-13) protein is Serine--tRNA ligase.